The primary structure comprises 86 residues: UPF0457 protein BCE33L2265 (86 aa).

The protein belongs to the UPF0457 family.

The sequence is that of UPF0457 protein BCE33L2265 from Bacillus cereus (strain ZK / E33L).